The primary structure comprises 868 residues: Translation initiation factor IF-2 (868 aa).

Composition is skewed to basic and acidic residues over residues 156-166 (ETVKEEEKINS) and 199-209 (SKKEEVKPEKV). Disordered regions lie at residues 156 to 177 (ETVKEEEKINSEENTAESQDEL) and 199 to 269 (SKKE…KYRE). Over residues 249–260 (RGGRSKFKKKKG) the composition is skewed to basic residues. Positions 368–537 (GRAPVVTIMG…LLQSEVLELK (170 aa)) constitute a tr-type G domain. Residues 377–384 (GHVDHGKT) are G1. 377–384 (GHVDHGKT) contacts GTP. A G2 region spans residues 402–406 (GITQH). Residues 423–426 (DTPG) form a G3 region. Residues 423–427 (DTPGH) and 477–480 (NKMD) contribute to the GTP site. A G4 region spans residues 477-480 (NKMD). Positions 513–515 (SAK) are G5.

Belongs to the TRAFAC class translation factor GTPase superfamily. Classic translation factor GTPase family. IF-2 subfamily.

The protein resides in the cytoplasm. Its function is as follows. One of the essential components for the initiation of protein synthesis. Protects formylmethionyl-tRNA from spontaneous hydrolysis and promotes its binding to the 30S ribosomal subunits. Also involved in the hydrolysis of GTP during the formation of the 70S ribosomal complex. This Legionella pneumophila subsp. pneumophila (strain Philadelphia 1 / ATCC 33152 / DSM 7513) protein is Translation initiation factor IF-2.